The following is a 156-amino-acid chain: 6,7-dimethyl-8-ribityllumazine synthase (156 aa).

Residues F22, 57–59 (AYE), and 81–83 (TVI) contribute to the 5-amino-6-(D-ribitylamino)uracil site. (2S)-2-hydroxy-3-oxobutyl phosphate is bound at residue 86–87 (GT). The Proton donor role is filled by H89. F114 lines the 5-amino-6-(D-ribitylamino)uracil pocket. Residue R128 coordinates (2S)-2-hydroxy-3-oxobutyl phosphate.

Belongs to the DMRL synthase family. As to quaternary structure, forms an icosahedral capsid composed of 60 subunits, arranged as a dodecamer of pentamers.

It catalyses the reaction (2S)-2-hydroxy-3-oxobutyl phosphate + 5-amino-6-(D-ribitylamino)uracil = 6,7-dimethyl-8-(1-D-ribityl)lumazine + phosphate + 2 H2O + H(+). Its pathway is cofactor biosynthesis; riboflavin biosynthesis; riboflavin from 2-hydroxy-3-oxobutyl phosphate and 5-amino-6-(D-ribitylamino)uracil: step 1/2. Catalyzes the formation of 6,7-dimethyl-8-ribityllumazine by condensation of 5-amino-6-(D-ribitylamino)uracil with 3,4-dihydroxy-2-butanone 4-phosphate. This is the penultimate step in the biosynthesis of riboflavin. This chain is 6,7-dimethyl-8-ribityllumazine synthase, found in Proteus mirabilis (strain HI4320).